The chain runs to 102 residues: Small ribosomal subunit protein uS10 (102 aa).

The protein belongs to the universal ribosomal protein uS10 family. As to quaternary structure, part of the 30S ribosomal subunit.

Functionally, involved in the binding of tRNA to the ribosomes. The protein is Small ribosomal subunit protein uS10 of Fervidobacterium nodosum (strain ATCC 35602 / DSM 5306 / Rt17-B1).